Reading from the N-terminus, the 100-residue chain is Osteocalcin (100 aa).

Positions 1–23 (MRTPMLLALLALATLCLAGRADA) are cleaved as a signal peptide. The propeptide occupies 24–51 (KPGDAESGKGAAFVSKQEGSEVVKRLRR). Positions 52 to 98 (YLDHWLGAPAPYPDPLEPKREVCELNPDCDELADHIGFQEAYRRFYG) constitute a Gla domain. Proline 60 carries the post-translational modification 4-hydroxyproline. Residues glutamate 68, glutamate 72, glutamate 75, and aspartate 81 each contribute to the Ca(2+) site. Residues glutamate 68, glutamate 72, and glutamate 75 each carry the 4-carboxyglutamate modification. Cysteine 74 and cysteine 80 form a disulfide bridge.

This sequence belongs to the osteocalcin/matrix Gla protein family. In terms of processing, gamma-carboxyglutamate residues are formed by vitamin K dependent carboxylation by GGCX. These residues are essential for the binding of calcium. Decarboxylation promotes the hormone activity.

Its subcellular location is the secreted. The carboxylated form is one of the main organic components of the bone matrix, which constitutes 1-2% of the total bone protein. It acts as a negative regulator of bone formation and is required to limit bone formation without impairing bone resorption or mineralization. The carboxylated form binds strongly to apatite and calcium. Its function is as follows. The uncarboxylated form acts as a hormone secreted by osteoblasts, which regulates different cellular processes, such as energy metabolism, male fertility and brain development. Regulates of energy metabolism by acting as a hormone favoring pancreatic beta-cell proliferation, insulin secretion and sensitivity and energy expenditure. Uncarboxylated osteocalcin hormone also promotes testosterone production in the testes: acts as a ligand for G protein-coupled receptor GPRC6A at the surface of Leydig cells, initiating a signaling response that promotes the expression of enzymes required for testosterone synthesis in a CREB-dependent manner. Also acts as a regulator of brain development: osteocalcin hormone crosses the blood-brain barrier and acts as a ligand for GPR158 on neurons, initiating a signaling response that prevents neuronal apoptosis in the hippocampus, favors the synthesis of all monoamine neurotransmitters and inhibits that of gamma-aminobutyric acid (GABA). Osteocalcin also crosses the placenta during pregnancy and maternal osteocalcin is required for fetal brain development. The sequence is that of Osteocalcin (BGLAP) from Bos taurus (Bovine).